The primary structure comprises 394 residues: Putative 8-amino-7-oxononanoate synthase (394 aa).

Arg-21 is a substrate binding site. 107–108 contacts pyridoxal 5'-phosphate; it reads GY. Residue His-132 coordinates substrate. Pyridoxal 5'-phosphate contacts are provided by residues Ser-180, 205–208, and 236–239; these read DEAH and TLSK. Lys-239 carries the N6-(pyridoxal phosphate)lysine modification. Residue Thr-361 participates in substrate binding.

This sequence belongs to the class-II pyridoxal-phosphate-dependent aminotransferase family. BioF subfamily. As to quaternary structure, homodimer. The cofactor is pyridoxal 5'-phosphate.

The enzyme catalyses 6-carboxyhexanoyl-[ACP] + L-alanine + H(+) = (8S)-8-amino-7-oxononanoate + holo-[ACP] + CO2. It functions in the pathway cofactor biosynthesis; biotin biosynthesis. Functionally, catalyzes the decarboxylative condensation of pimeloyl-[acyl-carrier protein] and L-alanine to produce 8-amino-7-oxononanoate (AON), [acyl-carrier protein], and carbon dioxide. The polypeptide is Putative 8-amino-7-oxononanoate synthase (bioF) (Acaryochloris marina (strain MBIC 11017)).